A 108-amino-acid chain; its full sequence is TYRO protein tyrosine kinase-binding protein (108 aa).

An N-terminal signal peptide occupies residues methionine 1–alanine 25. Over glutamine 26–proline 36 the chain is Extracellular. The chain crosses the membrane as a helical span at residues glycine 37–valine 57. Aspartate 46 is a Ca(2+) binding site. Over tyrosine 58 to lysine 108 the chain is Cytoplasmic. The disordered stretch occupies residues threonine 71–lysine 108. The ITAM domain maps to arginine 75 to glutamine 103. Positions serine 84–lysine 108 are enriched in polar residues. Phosphotyrosine occurs at positions 86 and 97.

It belongs to the TYROBP family. Homodimer; disulfide-linked. Homotrimer; disulfide-linked. Homotetramer; disulfide-linked. Homotrimers and homotetramers form when low levels of partner receptors are available and is competitive with assembly with interacting receptors. They may represent alternative oligomerization states or may be intermediates in the receptor assembly process. Binding of a metal cation aids in homooligomerization through coordination of the metal ion by the subunits of the oligomer. Interacts with TREM1. Interacts with TREM2. Interacts with CLECSF5. Interacts with CD300LB and CD300C2. Interacts with CD300E. Interacts (via ITAM domain) with SYK (via SH2 domains); activates SYK mediating neutrophils and macrophages integrin-mediated activation. Interacts with KLRC2. Interacts with CD300H. Interacts with KLRD1. Interacts with SIGLEC1. Post-translationally, following ligand binding by associated receptors, tyrosine phosphorylated in the ITAM domain which leads to activation of additional tyrosine kinases and subsequent cell activation.

Its subcellular location is the cell membrane. In terms of biological role, adapter protein which non-covalently associates with activating receptors found on the surface of a variety of immune cells to mediate signaling and cell activation following ligand binding by the receptors. TYROBP is tyrosine-phosphorylated in the ITAM domain following ligand binding by the associated receptors which leads to activation of additional tyrosine kinases and subsequent cell activation. Also has an inhibitory role in some cells. Non-covalently associates with activating receptors of the CD300 family to mediate cell activation. Also mediates cell activation through association with activating receptors of the CD200R family. Required for neutrophil activation mediated by integrin. Required for the activation of myeloid cells mediated by the CLEC5A/MDL1 receptor. Associates with natural killer (NK) cell receptors such as the KLRD1/KLRC2 heterodimer to mediate NK cell activation. Associates with TREM1 to mediate activation of neutrophils and monocytes. Associates with TREM2 on monocyte-derived dendritic cells to mediate up-regulation of chemokine receptor CCR7 and dendritic cell maturation and survival. Association with TREM2 mediates cytokine-induced formation of multinucleated giant cells which are formed by the fusion of macrophages. Stabilizes the TREM2 C-terminal fragment (TREM2-CTF) produced by TREM2 ectodomain shedding which suppresses the release of pro-inflammatory cytokines. In microglia, required with TREM2 for phagocytosis of apoptotic neurons. Required with ITGAM/CD11B in microglia to control production of microglial superoxide ions which promote the neuronal apoptosis that occurs during brain development. Promotes pro-inflammatory responses in microglia following nerve injury which accelerates degeneration of injured neurons. Positively regulates the expression of the IRAK3/IRAK-M kinase and IL10 production by liver dendritic cells and inhibits their T cell allosimulatory ability. Negatively regulates B cell proliferation. Required for CSF1-mediated osteoclast cytoskeletal organization. Positively regulates multinucleation during osteoclast development. The sequence is that of TYRO protein tyrosine kinase-binding protein from Bos taurus (Bovine).